Here is a 420-residue protein sequence, read N- to C-terminus: CinA-like protein (420 aa).

Belongs to the CinA family.

This is CinA-like protein from Chlorobium phaeobacteroides (strain BS1).